We begin with the raw amino-acid sequence, 749 residues long: Probable serine/threonine-protein kinase drkC (749 aa).

Residues 1-31 (MIIINKYIRMNKIAILFSFFILICCTGYSIS) form the signal peptide. Over 32–423 (YKINGINENK…TSPNYQKIIY (392 aa)) the chain is Extracellular. A disordered region spans residues 124–153 (DRTDQVSTSSSSSSFSEENKKSSSDDSAPA). Residues 130 to 139 (STSSSSSSFS) are compositionally biased toward low complexity. N-linked (GlcNAc...) asparagine glycosylation is found at asparagine 157, asparagine 189, asparagine 283, asparagine 358, asparagine 373, asparagine 381, and asparagine 397. Residues 424–444 (IVVGVGIAVLLIIAVGIYFII) traverse the membrane as a helical segment. Residues 445–749 (RLRIKNKRLN…QEIVKRLEAM (305 aa)) lie on the Cytoplasmic side of the membrane. Residues 491-749 (IVVQNRIGRG…QEIVKRLEAM (259 aa)) enclose the Protein kinase domain. ATP contacts are provided by residues 497 to 505 (IGRGSCAEV) and lysine 518. Catalysis depends on aspartate 615, which acts as the Proton acceptor.

This sequence belongs to the protein kinase superfamily. TKL Ser/Thr protein kinase family.

Its subcellular location is the membrane. It carries out the reaction L-seryl-[protein] + ATP = O-phospho-L-seryl-[protein] + ADP + H(+). The enzyme catalyses L-threonyl-[protein] + ATP = O-phospho-L-threonyl-[protein] + ADP + H(+). The chain is Probable serine/threonine-protein kinase drkC (drkC) from Dictyostelium discoideum (Social amoeba).